The sequence spans 407 residues: Putative glucose/galactose transporter (407 aa).

12 consecutive transmembrane segments (helical) span residues 11–31 (GSLT…DILI), 47–67 (LIQF…GNVI), 70–90 (IGYP…CALF), 96–116 (FGSY…IVCL), 139–159 (VQAF…LLIF), 180–200 (VQMP…VMYL), 225–245 (FVFG…IGSF), 263–283 (HYLV…SALM), 300–320 (IILI…ALTF), 321–341 (VGFF…LNLG), 349–369 (GVIS…GVVT), and 378–398 (NLLY…FFAL).

The protein belongs to the major facilitator superfamily. FHS transporter (TC 2.A.1.7) family.

The protein resides in the cell inner membrane. Intake of glucose and galactose. The chain is Putative glucose/galactose transporter (gluP) from Helicobacter pylori (strain J99 / ATCC 700824) (Campylobacter pylori J99).